The following is a 494-amino-acid chain: Glutamyl-tRNA(Gln) amidotransferase subunit A (494 aa).

Active-site charge relay system residues include K88 and S163. S187 (acyl-ester intermediate) is an active-site residue.

It belongs to the amidase family. GatA subfamily. In terms of assembly, heterotrimer of A, B and C subunits.

The catalysed reaction is L-glutamyl-tRNA(Gln) + L-glutamine + ATP + H2O = L-glutaminyl-tRNA(Gln) + L-glutamate + ADP + phosphate + H(+). Its function is as follows. Allows the formation of correctly charged Gln-tRNA(Gln) through the transamidation of misacylated Glu-tRNA(Gln) in organisms which lack glutaminyl-tRNA synthetase. The reaction takes place in the presence of glutamine and ATP through an activated gamma-phospho-Glu-tRNA(Gln). The protein is Glutamyl-tRNA(Gln) amidotransferase subunit A of Corynebacterium diphtheriae (strain ATCC 700971 / NCTC 13129 / Biotype gravis).